A 479-amino-acid chain; its full sequence is Deoxyribodipyrimidine photo-lyase (479 aa).

Residues 6 to 132 enclose the Photolyase/cryptochrome alpha/beta domain; the sequence is APVIVWFRKD…TVRSFSGQLL (127 aa). Y226 provides a ligand contact to FAD. R230 lines the DNA pocket. Residues 238–242 and 277–284 contribute to the FAD site; these read TSLLS and EIVWREFC. 2 interaction with DNA regions span residues 277 to 284 and 343 to 344; these read EIVWREFC and NR. 374–376 lines the FAD pocket; the sequence is DAD. Q406 is a binding site for DNA.

It belongs to the DNA photolyase class-3 family. The cofactor is FAD. (6R)-5,10-methylene-5,6,7,8-tetrahydrofolate serves as cofactor.

It catalyses the reaction cyclobutadipyrimidine (in DNA) = 2 pyrimidine residues (in DNA).. Photolyase involved in the repair of UV radiation-induced DNA damage. By using blue-light energy, catalyzes the photoreactivation of cyclobutane pyrimidine dimers (CPDs), which are formed between adjacent bases on the same DNA strand upon exposure to ultraviolet radiation. Can repair CPD lesions in ssDNA as well as in dsDNA. This Agrobacterium fabrum (strain C58 / ATCC 33970) (Agrobacterium tumefaciens (strain C58)) protein is Deoxyribodipyrimidine photo-lyase.